The sequence spans 231 residues: MKKTLLASSLAVGLGIVAGNAGHEAHASEADLNKASLAQMAQSNDQTLNQKPIEAGAYNYTFDYEGFTYHFESDGTHFAWNYHATGANGADMSAQAPATNNVAPSADQANQVQSQEVEAPQNAQTQQPQASTSNNSQVTATPTESKASEGSSVNVNDHLKQIAQRESGGNIHAVNPTSGAAGKYQFLQSTWDSVAPAKYKGVSPANAPESVQDAAAVKLYNTGGAGHWVTA.

A signal peptide spans 1-27 (MKKTLLASSLAVGLGIVAGNAGHEAHA). The interval 93-153 (SAQAPATNNV…ESKASEGSSV (61 aa)) is disordered. Positions 96–116 (APATNNVAPSADQANQVQSQE) are enriched in polar residues. Positions 119 to 137 (APQNAQTQQPQASTSNNSQ) are enriched in low complexity. The span at 138-153 (VTATPTESKASEGSSV) shows a compositional bias: polar residues.

The protein belongs to the transglycosylase family. SceD subfamily.

It is found in the secreted. Its function is as follows. Is able to cleave peptidoglycan and affects clumping and separation of bacterial cells. The polypeptide is Probable transglycosylase SceD (sceD) (Staphylococcus aureus (strain bovine RF122 / ET3-1)).